The chain runs to 204 residues: Shikimate kinase (204 aa).

35 to 40 (ASGKST) contacts ATP. Position 39 (S39) interacts with Mg(2+). The substrate site is built by D57, R81, and G103. R142 contributes to the ATP binding site. R169 provides a ligand contact to substrate.

This sequence belongs to the shikimate kinase family. In terms of assembly, monomer. The cofactor is Mg(2+).

It localises to the cytoplasm. The catalysed reaction is shikimate + ATP = 3-phosphoshikimate + ADP + H(+). The protein operates within metabolic intermediate biosynthesis; chorismate biosynthesis; chorismate from D-erythrose 4-phosphate and phosphoenolpyruvate: step 5/7. Functionally, catalyzes the specific phosphorylation of the 3-hydroxyl group of shikimic acid using ATP as a cosubstrate. The chain is Shikimate kinase from Salinibacter ruber (strain DSM 13855 / M31).